We begin with the raw amino-acid sequence, 264 residues long: Splicing factor U2af 38 kDa subunit (264 aa).

Residues 12-40 (EKDKVNCSFYFKIGACRHGDRCSRIHNKP) form a C3H1-type 1 zinc finger. A Phosphoserine modification is found at Ser-19. The RRM domain maps to 44–149 (QTVLLQNLYV…RPVYSELSPV (106 aa)). The segment at 151 to 178 (DFREACCRQYEMGECTRSGFCNFMHLKP) adopts a C3H1-type 2 zinc-finger fold. Basic residues predominate over residues 190 to 219 (RRRRARSRSRSPGRRRGSRSRSRSPGRRGG). The tract at residues 190 to 264 (RRRRARSRSR…GGGGGGGGRY (75 aa)) is disordered. The segment covering 233 to 251 (NERDNMRGNDRGNDRDRRK) has biased composition (basic and acidic residues). Gly residues predominate over residues 253-264 (GGGGGGGGGGRY).

Belongs to the splicing factor SR family. As to quaternary structure, associates with a 65 kDa protein.

It is found in the nucleus. Its function is as follows. Necessary for the splicing of pre-mRNA. Binds to the polypyrimidine tract of introns early during spliceosome assembly. This is Splicing factor U2af 38 kDa subunit (U2af38) from Drosophila melanogaster (Fruit fly).